We begin with the raw amino-acid sequence, 373 residues long: Glutamate 5-kinase (373 aa).

Lys-15 contributes to the ATP binding site. Ser-55, Asp-142, and Asn-154 together coordinate substrate. Residues 174 to 175 and 216 to 222 each bind ATP; these read TD and TGGMVTK. Residues 281–359 form the PUA domain; sequence SGKIIVDDGA…GEIEAILGYK (79 aa).

The protein belongs to the glutamate 5-kinase family.

Its subcellular location is the cytoplasm. The enzyme catalyses L-glutamate + ATP = L-glutamyl 5-phosphate + ADP. It participates in amino-acid biosynthesis; L-proline biosynthesis; L-glutamate 5-semialdehyde from L-glutamate: step 1/2. Functionally, catalyzes the transfer of a phosphate group to glutamate to form L-glutamate 5-phosphate. In Geobacter sulfurreducens (strain ATCC 51573 / DSM 12127 / PCA), this protein is Glutamate 5-kinase.